A 308-amino-acid polypeptide reads, in one-letter code: tRNA pseudouridine synthase B (308 aa).

Asp-44 acts as the Nucleophile in catalysis.

The protein belongs to the pseudouridine synthase TruB family. Type 1 subfamily.

The enzyme catalyses uridine(55) in tRNA = pseudouridine(55) in tRNA. Functionally, responsible for synthesis of pseudouridine from uracil-55 in the psi GC loop of transfer RNAs. The sequence is that of tRNA pseudouridine synthase B from Nitratidesulfovibrio vulgaris (strain DSM 19637 / Miyazaki F) (Desulfovibrio vulgaris).